The primary structure comprises 668 residues: Glucan endo-1,3-beta-D-glucosidase (668 aa).

Residues 2-208 are beta-sandwich subdomain; it reads VNIQTNTSYI…SGIIRIALLP (207 aa). Positions 2–668 constitute a GH81 domain; it reads VNIQTNTSYI…LWWIHSRSDE (667 aa). N-linked (GlcNAc...) asparagine glycans are attached at residues N65, N124, N160, and N187. The segment at 209–299 is alpha/beta subdomain; sequence DSDSKHEAVL…GDSWVLKTDP (91 aa). The tract at residues 240–443 is involved in beta-glucan binding; that stretch reads EYNWEKKDSG…TKLDPAWGRK (204 aa). The segment at 309-668 is (alpha/beta)6 barrel subdomain; it reads GIKEESHDEI…LWWIHSRSDE (360 aa). Residue D418 is part of the active site. H422 contributes to the (1,3-beta-D-glucosyl)n binding site. N-linked (GlcNAc...) asparagine glycosylation occurs at N465. Residues E494 and E498 contribute to the active site. (1,3-beta-D-glucosyl)n contacts are provided by E494 and E498. The tract at residues 564 to 566 is may provide specificity for triple-helical beta-glucan; sequence KRD.

Belongs to the glycosyl hydrolase 81 family. In terms of tissue distribution, expressed in roots (at protein level). Expressed in leaves.

It localises to the secreted. It is found in the cell wall. It catalyses the reaction Hydrolysis of (1-&gt;3)-beta-D-glucosidic linkages in (1-&gt;3)-beta-D-glucans.. Cleaves internal linkages in 1,3-beta-glucan. Beta-glucan, a polysaccharide constituent of fungal cell walls, can act as an elicitor in the plant, triggering defense responses including phytoalexin synthesis. The polypeptide is Glucan endo-1,3-beta-D-glucosidase (Glycine max (Soybean)).